Consider the following 379-residue polypeptide: Transcription termination factor Rho (379 aa).

Residues 1–68 (MTDKYGFLRS…KRIFQINGRF (68 aa)) form the Rho RNA-BD domain. ATP-binding positions include 111–116 (GKGQRG), 123–128 (KTGKTT), and arginine 154.

It belongs to the Rho family. Homohexamer. The homohexamer assembles into an open ring structure.

Its function is as follows. Facilitates transcription termination by a mechanism that involves Rho binding to the nascent RNA, activation of Rho's RNA-dependent ATPase activity, and release of the mRNA from the DNA template. The sequence is that of Transcription termination factor Rho from Karelsulcia muelleri (strain SMDSEM) (Sulcia muelleri).